We begin with the raw amino-acid sequence, 341 residues long: S-adenosylmethionine:tRNA ribosyltransferase-isomerase (341 aa).

Belongs to the QueA family. Monomer.

The protein resides in the cytoplasm. It catalyses the reaction 7-aminomethyl-7-carbaguanosine(34) in tRNA + S-adenosyl-L-methionine = epoxyqueuosine(34) in tRNA + adenine + L-methionine + 2 H(+). Its pathway is tRNA modification; tRNA-queuosine biosynthesis. Functionally, transfers and isomerizes the ribose moiety from AdoMet to the 7-aminomethyl group of 7-deazaguanine (preQ1-tRNA) to give epoxyqueuosine (oQ-tRNA). This is S-adenosylmethionine:tRNA ribosyltransferase-isomerase from Desulforamulus reducens (strain ATCC BAA-1160 / DSM 100696 / MI-1) (Desulfotomaculum reducens).